Here is a 1488-residue protein sequence, read N- to C-terminus: Eukaryotic translation initiation factor 4G (1488 aa).

Disordered stretches follow at residues valine 196–serine 320, aspartate 337–glutamate 367, and threonine 415–alanine 707. Composition is skewed to basic and acidic residues over residues valine 216–proline 244 and alanine 274–threonine 299. 4 stretches are compositionally biased toward polar residues: residues lysine 300–serine 310, serine 345–serine 360, serine 448–threonine 464, and cysteine 473–leucine 495. The span at serine 496–threonine 520 shows a compositional bias: low complexity. Residues glutamine 555–serine 566 show a composition bias toward basic and acidic residues. The segment covering glutamine 627–aspartate 646 has biased composition (polar residues). The span at leucine 651 to proline 671 shows a compositional bias: basic and acidic residues. A compositionally biased stretch (polar residues) spans proline 683–alanine 696. Positions glycine 709–phenylalanine 721 are EIF4E-binding. The span at aspartate 753–leucine 784 shows a compositional bias: basic and acidic residues. Disordered regions lie at residues aspartate 753 to aspartate 795, arginine 974 to glutamate 1000, and tryptophan 1107 to glutamate 1299. Residues glutamine 883–lysine 1106 form the MIF4G domain. The segment covering glutamate 978–glycine 989 has biased composition (acidic residues). Composition is skewed to basic and acidic residues over residues glutamate 990–glutamate 1000, arginine 1111–alanine 1132, isoleucine 1181–aspartate 1191, and threonine 1254–serine 1267. Residues alanine 1273–serine 1294 show a composition bias toward polar residues. The MI domain occupies glutamate 1299–glutamate 1423.

It belongs to the eukaryotic initiation factor 4G family. In terms of assembly, EIF4F is a multi-subunit complex, the composition of which varies with external and internal environmental conditions. It is composed of at least EIF4A, EIF4E and EIF4G. In higher plants two isoforms of EIF4F have been identified, named isoform EIF4F and isoform EIF(iso)4F. Isoform EIF4F has subunits p220 and p26, whereas isoform EIF(iso)4F has subunits p82 and p28.

In terms of biological role, component of the protein complex eIF4F, which is involved in the recognition of the mRNA cap, ATP-dependent unwinding of 5'-terminal secondary structure and recruitment of mRNA to the ribosome. The polypeptide is Eukaryotic translation initiation factor 4G (Triticum aestivum (Wheat)).